The chain runs to 190 residues: Putative manganese efflux pump MntP (190 aa).

6 helical membrane-spanning segments follow: residues proline 3 to glycine 23, leucine 41 to alanine 61, aspartate 69 to leucine 89, phenylalanine 105 to glycine 125, isoleucine 133 to methionine 153, and isoleucine 168 to alanine 188.

This sequence belongs to the MntP (TC 9.B.29) family.

The protein resides in the cell inner membrane. Its function is as follows. Probably functions as a manganese efflux pump. The sequence is that of Putative manganese efflux pump MntP from Pseudomonas syringae pv. tomato (strain ATCC BAA-871 / DC3000).